The following is a 290-amino-acid chain: MTVLLTGGTGRTAKHIAGIFRQTNVPFLVASRSSSAGTAENHRKFDWLDEETFPNALSVDQGMKPISVVWLCPPPLYDLATPVIKFIDFAVSQNVKKFVLLSASVIQKGGPAMGKIHGHLDSIKDVTYTVLRPTWFMENFSTKGEIQCEAIRRDSTVYSATENGKIPFISVVDIARVAACALTAETLKNSDHILQGPDLLTYDEVAQALTGVLGRKITHTKMTEGELAEKLMEEGVTPEEAYMHAAMDSMIKSGSEERVVSDEVKEWTGVKPRGFINFALSEKAAWRARK.

It belongs to the fgaFS/easG family. Monomer.

The catalysed reaction is agroclavine + NADP(+) = didehydroagroclavine + NADPH + H(+). Its pathway is alkaloid biosynthesis; ergot alkaloid biosynthesis. Functionally, agroclavine dehydrogenase; part of the gene cluster that mediates the biosynthesis of fungal ergot alkaloid. DmaW catalyzes the first step of ergot alkaloid biosynthesis by condensing dimethylallyl diphosphate (DMAP) and tryptophan to form 4-dimethylallyl-L-tryptophan. The second step is catalyzed by the methyltransferase easF that methylates 4-dimethylallyl-L-tryptophan in the presence of S-adenosyl-L-methionine, resulting in the formation of 4-dimethylallyl-L-abrine. The catalase easC and the FAD-dependent oxidoreductase easE then transform 4-dimethylallyl-L-abrine to chanoclavine-I which is further oxidized by easD in the presence of NAD(+), resulting in the formation of chanoclavine-I aldehyde. Agroclavine dehydrogenase easG then mediates the conversion of chanoclavine-I aldehyde to agroclavine via a non-enzymatic adduct reaction: the substrate is an iminium intermediate that is formed spontaneously from chanoclavine-I aldehyde in the presence of glutathione. The presence of easA is not required to complete this reaction. Further conversion of agroclavine to paspalic acid is a two-step process involving oxidation of agroclavine to elymoclavine and of elymoclavine to paspalic acid, the second step being performed by the elymoclavine oxidase cloA. Paspalic acid is then further converted to D-lysergic acid. Ergopeptines are assembled from D-lysergic acid and three different amino acids by the D-lysergyl-peptide-synthetases composed each of a monomudular and a trimodular nonribosomal peptide synthetase subunit. LpsB and lpsC encode the monomodular subunits responsible for D-lysergic acid activation and incorporation into the ergopeptine backbone. LpsA1 and A2 subunits encode the trimodular nonribosomal peptide synthetase assembling the tripeptide portion of ergopeptines. LpsA1 is responsible for formation of the major ergopeptine, ergotamine, and lpsA2 for alpha-ergocryptine, the minor ergopeptine of the total alkaloid mixture elaborated by C.purpurea. D-lysergyl-tripeptides are assembled by the nonribosomal peptide synthetases and released as N-(D-lysergyl-aminoacyl)-lactams. Cyclolization of the D-lysergyl-tripeptides is performed by the Fe(2+)/2-ketoglutarate-dependent dioxygenase easH which introduces a hydroxyl group into N-(D-lysergyl-aminoacyl)-lactam at alpha-C of the aminoacyl residue followed by spontaneous condensation with the terminal lactam carbonyl group. This is Agroclavine dehydrogenase from Claviceps purpurea (Ergot fungus).